Here is an 80-residue protein sequence, read N- to C-terminus: MATWLAIIFIVAALILGLIGGFLLARKYMMDYLKKNPPINEEMLRMMMMQMGQKPSQKKINQMMTMMNKNMDQNMKSAKK.

Residues 4-24 (WLAIIFIVAALILGLIGGFLL) form a helical membrane-spanning segment.

The protein belongs to the UPF0154 family.

The protein resides in the cell membrane. The chain is UPF0154 protein SaurJH1_1431 from Staphylococcus aureus (strain JH1).